A 361-amino-acid polypeptide reads, in one-letter code: Queuine tRNA-ribosyltransferase (361 aa).

The active-site Proton acceptor is aspartate 92. Substrate contacts are provided by residues 92-96 (DSGGF), aspartate 146, glutamine 189, and glycine 216. The segment at 247–253 (GVGKPAD) is RNA binding. Aspartate 266 acts as the Nucleophile in catalysis. The interval 271–275 (TRSGR) is RNA binding; important for wobble base 34 recognition. Residues cysteine 304, cysteine 306, cysteine 309, and histidine 335 each contribute to the Zn(2+) site.

It belongs to the queuine tRNA-ribosyltransferase family. As to quaternary structure, homodimer. Within each dimer, one monomer is responsible for RNA recognition and catalysis, while the other monomer binds to the replacement base PreQ1. The cofactor is Zn(2+).

The enzyme catalyses 7-aminomethyl-7-carbaguanine + guanosine(34) in tRNA = 7-aminomethyl-7-carbaguanosine(34) in tRNA + guanine. Its pathway is tRNA modification; tRNA-queuosine biosynthesis. Catalyzes the base-exchange of a guanine (G) residue with the queuine precursor 7-aminomethyl-7-deazaguanine (PreQ1) at position 34 (anticodon wobble position) in tRNAs with GU(N) anticodons (tRNA-Asp, -Asn, -His and -Tyr). Catalysis occurs through a double-displacement mechanism. The nucleophile active site attacks the C1' of nucleotide 34 to detach the guanine base from the RNA, forming a covalent enzyme-RNA intermediate. The proton acceptor active site deprotonates the incoming PreQ1, allowing a nucleophilic attack on the C1' of the ribose to form the product. After dissociation, two additional enzymatic reactions on the tRNA convert PreQ1 to queuine (Q), resulting in the hypermodified nucleoside queuosine (7-(((4,5-cis-dihydroxy-2-cyclopenten-1-yl)amino)methyl)-7-deazaguanosine). The chain is Queuine tRNA-ribosyltransferase from Rickettsia canadensis (strain McKiel).